Consider the following 56-residue polypeptide: Endoglucanase Cel5A (56 aa).

Residue Glu-45 is the Nucleophile of the active site.

Belongs to the glycosyl hydrolase 5 (cellulase A) family.

It localises to the secreted. It is found in the extracellular space. The catalysed reaction is Endohydrolysis of (1-&gt;4)-beta-D-glucosidic linkages in cellulose, lichenin and cereal beta-D-glucans.. In terms of biological role, has avicelase and carboxymethylcellulase activity. The sequence is that of Endoglucanase Cel5A from Gloeophyllum trabeum (Brown rot fungus).